An 839-amino-acid chain; its full sequence is Elongation factor 2 (839 aa).

The 232-residue stretch at 17–248 (ENIRNMSVIA…MGRLWGDSYF (232 aa)) folds into the tr-type G domain. Residues 26-33 (AHVDHGKT), 156-159 (NKVD), and 211-213 (SGL) contribute to the GTP site. Residue H698 is modified to Diphthamide.

Belongs to the TRAFAC class translation factor GTPase superfamily. Classic translation factor GTPase family. EF-G/EF-2 subfamily. Post-translationally, phosphorylation by EF-2 kinase completely inactivates EF-2.

The protein resides in the cytoplasm. The enzyme catalyses GTP + H2O = GDP + phosphate + H(+). In terms of biological role, catalyzes the GTP-dependent ribosomal translocation step during translation elongation. During this step, the ribosome changes from the pre-translocational (PRE) to the post-translocational (POST) state as the newly formed A-site-bound peptidyl-tRNA and P-site-bound deacylated tRNA move to the P and E sites, respectively. Catalyzes the coordinated movement of the two tRNA molecules, the mRNA and conformational changes in the ribosome. This is Elongation factor 2 (efbA) from Dictyostelium discoideum (Social amoeba).